The following is a 496-amino-acid chain: MRKEVLPPVLSTTTVCFEKKPIIATLLALSLVMIVWNLPPYYHNLISTARPCSAVTTTTTTTLLSSSNFTSAENFTTSLSTTTAAASQKYDSTPSDPNKRVFQPFGNAAALFVLMGAYRGGPTTFSVIGLASKPIHVYGKPWYKCEWISNNGTSIRAKAQKILPDWGYGRVYTVVVVNCTFNSNPNSDNTGGKLILNAYYNESPKLFERFTTLEESAGIYDESKYSPPYQYDYLYCGSSLYGNVSASRMREWMAYHAWFFGDKSHFVFHDAGGVSPEVRKVLEPWIRAGRVTVQNIRDQSQYDGYYYNQFLIVNDCLHRYRYAANWTFFFDVDEYIYLPHGNTLESVLDEFSVNTQFTIEQNPMSSVLCINDSSQDYPRQWGFEKLLFKDSRTKIRRDRKYAIQAKNAFATGVHMSENIVGKTLHKTETKIRYYHYHNTITVHEELCREMLPNSAKKKVTLYNKLPYVYDDNMKKLVKTIKEFEQKKLGTDVKNFS.

Residues Ile22–Tyr42 form a helical membrane-spanning segment. The GT92 domain occupies Asp232 to Lys464.

This sequence belongs to the glycosyltransferase 92 family. As to expression, expressed in root vasculature, mature leaves, trichomes, flowers, siliques and seeds.

Its subcellular location is the golgi apparatus membrane. Its function is as follows. Involved in the biosynthesis of beta-1,4-galactan. Can transfer galactose residues from UDP-galactose to beta-1,4-galactopentaose in vitro. Forms specifically beta-1,4-galactosyl linkages and can add successive beta-1,4-galactosyl residues to the acceptor. Beta-1,4-galactans are abundant polysaccharides in plant cell walls and are found as side-chain of rhamnogalacturonan I, which is a major component of pectin. This chain is Galactan beta-1,4-galactosyltransferase GALS1, found in Arabidopsis thaliana (Mouse-ear cress).